The chain runs to 92 residues: Bombyxin A-5 (92 aa).

The first 19 residues, 1-19, serve as a signal peptide directing secretion; sequence MKLLLAIALMLTTVMWAST. Position 20 is a pyrrolidone carboxylic acid (Gln20). Intrachain disulfides connect Cys29-Cys79, Cys41-Cys92, and Cys78-Cys83. The propeptide at 50–71 is c peptide like; that stretch reads SDAQFASYGSAWLMPYSEGRDQ.

It belongs to the insulin family. As to quaternary structure, heterodimer of a B chain and an A chain linked by two disulfide bonds.

Its subcellular location is the secreted. Its function is as follows. Brain peptide responsible for activation of prothoracic glands to produce ecdysone in insects. This chain is Bombyxin A-5 (BBXA5), found in Bombyx mori (Silk moth).